The chain runs to 284 residues: Shikimate dehydrogenase (NADP(+)) (284 aa).

Residues 20 to 22 and Ser-67 each bind shikimate; that span reads SIS. Catalysis depends on Lys-71, which acts as the Proton acceptor. An NADP(+)-binding site is contributed by Asp-83. Positions 92 and 107 each coordinate shikimate. Residues 129 to 133 and Ile-227 contribute to the NADP(+) site; that span reads GAGGA. Tyr-229 is a shikimate binding site. Gly-250 contributes to the NADP(+) binding site.

It belongs to the shikimate dehydrogenase family. As to quaternary structure, homodimer.

The catalysed reaction is shikimate + NADP(+) = 3-dehydroshikimate + NADPH + H(+). It participates in metabolic intermediate biosynthesis; chorismate biosynthesis; chorismate from D-erythrose 4-phosphate and phosphoenolpyruvate: step 4/7. Involved in the biosynthesis of the chorismate, which leads to the biosynthesis of aromatic amino acids. Catalyzes the reversible NADPH linked reduction of 3-dehydroshikimate (DHSA) to yield shikimate (SA). The sequence is that of Shikimate dehydrogenase (NADP(+)) from Streptococcus pneumoniae serotype 2 (strain D39 / NCTC 7466).